Reading from the N-terminus, the 135-residue chain is Protein Wnt-7a (135 aa).

2 cysteine pairs are disulfide-bonded: Cys-3/Cys-17 and Cys-5/Cys-12. Ser-9 carries O-palmitoleoyl serine; by PORCN lipidation. Positions 41–69 (VEPVRASRNKRPTFLKIKKPLSYRKPMDT) are disordered linker. 4 cysteine pairs are disulfide-bonded: Cys-81-Cys-112, Cys-97-Cys-107, Cys-111-Cys-134, and Cys-130-Cys-131. A glycan (N-linked (GlcNAc...) asparagine) is linked at Asn-98.

This sequence belongs to the Wnt family. In terms of processing, palmitoleoylation is required for efficient binding to frizzled receptors. Depalmitoleoylation leads to Wnt signaling pathway inhibition. In embryo, in brain and ventral neural tube; in adults, in brain.

The protein localises to the secreted. Its subcellular location is the extracellular space. The protein resides in the extracellular matrix. Ligand for members of the frizzled family of seven transmembrane receptors that functions in the canonical Wnt/beta-catenin signaling pathway. Plays an important role in embryonic development, including dorsal versus ventral patterning during limb development, skeleton development and urogenital tract development. Required for central nervous system (CNS) angiogenesis and blood-brain barrier regulation. The sequence is that of Protein Wnt-7a (wnt7a) from Xenopus laevis (African clawed frog).